Reading from the N-terminus, the 500-residue chain is Lysine--tRNA ligase (500 aa).

E410 and E417 together coordinate Mg(2+).

It belongs to the class-II aminoacyl-tRNA synthetase family. In terms of assembly, homodimer. It depends on Mg(2+) as a cofactor.

The protein resides in the cytoplasm. It catalyses the reaction tRNA(Lys) + L-lysine + ATP = L-lysyl-tRNA(Lys) + AMP + diphosphate. The polypeptide is Lysine--tRNA ligase (Pseudomonas entomophila (strain L48)).